A 594-amino-acid polypeptide reads, in one-letter code: 4-alpha-glucanotransferase DPE1, chloroplastic/amyloplastic (594 aa).

A chloroplast-targeting transit peptide spans 1–37 (MATLSLPLPHLTQAIPARARPRPRPLRGIPARLLSCR).

This sequence belongs to the disproportionating enzyme family.

It localises to the plastid. Its subcellular location is the chloroplast. The protein localises to the amyloplast. It carries out the reaction Transfers a segment of a (1-&gt;4)-alpha-D-glucan to a new position in an acceptor, which may be glucose or a (1-&gt;4)-alpha-D-glucan.. Chloroplastic alpha-glucanotransferase involved in maltotriose metabolism. This chain is 4-alpha-glucanotransferase DPE1, chloroplastic/amyloplastic (DPE1), found in Oryza sativa subsp. japonica (Rice).